The primary structure comprises 162 residues: Gas vesicle protein I (162 aa).

The tract at residues 1 to 162 (MTGKQHQKHE…AERQRGGADE (162 aa)) is disordered. 2 stretches are compositionally biased toward basic and acidic residues: residues 22-37 (INRDKARSKLLRQREK) and 47-64 (RQSEVRRGNQSKAQHDTQ). Composition is skewed to polar residues over residues 65–74 (SETQRGTQSK) and 81–110 (TGGTKNPTAHSTLPPQKTNAENAVRNSHST). 2 stretches are compositionally biased toward basic and acidic residues: residues 122–142 (ARERLYGLRLHRETTASEDKS) and 151–162 (PKAERQRGGADE).

Belongs to the gas vesicle GvpI family. As to quaternary structure, gvpF to GvpM interact with each other in vitro, and may form multi-subunit complex(es). Interacts with GvpC and GvpO.

Its subcellular location is the gas vesicle. In terms of biological role, proteins GvpF to GvpM might be involved in nucleating gas vesicle formation. A minor component of the gas vesicle. Gas vesicles are hollow, gas filled proteinaceous nanostructures found in some microorganisms. They allow positioning of halobacteria at the optimal depth for growth in the poorly aerated, shallow brine pools of their habitat. Its function is as follows. Expression of a 9.5 kb mc-vac DNA fragment containing 2 divergently transcribed regions (gvpD-gvpE-gvpF-gvpG-gvpH-gvpI-gvpJ-gvpK-gvpL-gvpM and gvpA-gvpC-gvpN-gvpO) allows H.volcanii to produce gas vesicles. The protein is Gas vesicle protein I of Haloferax mediterranei (strain ATCC 33500 / DSM 1411 / JCM 8866 / NBRC 14739 / NCIMB 2177 / R-4) (Halobacterium mediterranei).